Reading from the N-terminus, the 193-residue chain is Transcriptional repressor NrdR (193 aa).

A zinc finger spans residues 3–34; the sequence is CPYCGGLDTQVKDSRPSEDASAIRRRRICPDC. Residues 49-139 form the ATP-cone domain; it reads LTVVKRSGRK…VYKNFREAKD (91 aa). Residues 150–193 are disordered; that stretch reads DQQDGAVPQAEADRPIGAGPPSEAAQPAAGEGGDAPMRRARSRA.

It belongs to the NrdR family. It depends on Zn(2+) as a cofactor.

In terms of biological role, negatively regulates transcription of bacterial ribonucleotide reductase nrd genes and operons by binding to NrdR-boxes. In Methylobacterium nodulans (strain LMG 21967 / CNCM I-2342 / ORS 2060), this protein is Transcriptional repressor NrdR.